The following is a 142-amino-acid chain: Large ribosomal subunit protein uL11 (142 aa).

It belongs to the universal ribosomal protein uL11 family. Part of the ribosomal stalk of the 50S ribosomal subunit. Interacts with L10 and the large rRNA to form the base of the stalk. L10 forms an elongated spine to which L12 dimers bind in a sequential fashion forming a multimeric L10(L12)X complex. One or more lysine residues are methylated.

Functionally, forms part of the ribosomal stalk which helps the ribosome interact with GTP-bound translation factors. The polypeptide is Large ribosomal subunit protein uL11 (Mesoplasma florum (strain ATCC 33453 / NBRC 100688 / NCTC 11704 / L1) (Acholeplasma florum)).